Consider the following 500-residue polypeptide: Protein-cysteine N-palmitoyltransferase Rasp (500 aa).

Transmembrane regions (helical) follow at residues 15 to 35 (IFVY…KIYG), 73 to 93 (GDFI…QGFI), 105 to 125 (FIGV…MVLL), 134 to 154 (IVSL…WILC), 206 to 226 (SLVQ…GPII), 243 to 263 (LGFV…QCAL), 293 to 313 (FMGQ…IAFA), 372 to 392 (LTFA…IWSI), 429 to 449 (LYAM…VYFI), and 461 to 481 (GAYL…YCFF). The active site involves His381.

The protein belongs to the membrane-bound acyltransferase family. HHAT subfamily.

The protein localises to the membrane. It catalyses the reaction N-terminal L-cysteinyl-[protein] + hexadecanoyl-CoA = N-terminal N-hexadecanoyl-L-cysteinyl-[protein] + CoA + H(+). It carries out the reaction N-terminal L-cysteinyl-[protein]-C-terminal glycyl cholesterol ester + hexadecanoyl-CoA = N-terminal N-hexadecanoyl-L-cysteinyl-[protein]-C-terminal glycyl cholesterol ester + CoA + H(+). Its function is as follows. Required in hedgehog (hh) expressing cells for production of appropriate signaling activity in embryos and in the imaginal precursors of adult tissues. Acts within the secretory pathway to catalyze N-terminal palmitoylation of Hh; this lipid modification is required for the embryonic and larval patterning activities of the Hh signal. Not required for Wg signaling. This Drosophila melanogaster (Fruit fly) protein is Protein-cysteine N-palmitoyltransferase Rasp (rasp).